The following is a 363-amino-acid chain: Zinc finger protein 830 (363 aa).

Ala-2 carries the post-translational modification N-acetylalanine. The stretch at 16-40 (VNQEELRRLMREKQRLSTNRKRIES) forms a coiled coil. The C2H2-type zinc-finger motif lies at 53–75 (CALCNTPVKSELLWQTHVLGKQH). The tract at residues 81-213 (ELKGAKGATQ…NPPKAPLVPH (133 aa)) is disordered. The segment covering 90-99 (QGPSTGTVPQ) has biased composition (polar residues). Residues 104–115 (RATDVESQDAKK) show a composition bias toward basic and acidic residues. Residues 129-143 (SASSANLDAARAAPS) are compositionally biased toward low complexity. Over residues 152–164 (DYDDEEEEEEEGG) the composition is skewed to acidic residues. Positions 165 to 184 (GEERRDSSKHLPDAQGKEHS) are enriched in basic and acidic residues. A compositionally biased stretch (polar residues) spans 189 to 205 (RETTSNVLPNDPFNTNP). Ser-216 is subject to Phosphoserine. A coiled-coil region spans residues 303-331 (IECYRRVEKLRNRQDEIKNKLKEVLTIKE). Ser-342 and Ser-353 each carry phosphoserine.

In terms of assembly, component of the XAB2 complex, a multimeric protein complex composed of XAB2, PRPF19, AQR, ZNF830, ISY1, and PPIE; this complex binds preferentially to RNA. Interacts with XAB2. Identified in a pentameric intron-binding (IB) complex composed of AQR, XAB2, ISY1, ZNF830 and PPIE that is incorporated into the spliceosome as a preassembled complex. The IB complex does not contain PRPF19. Phosphorylated in response to DNA damage by the cell cycle checkpoint kinases ATR/ATM. In terms of tissue distribution, widely expressed at low level. Expressed in oocytes from primordial to antral follicles. Also detected in somatic cells of the ovary, namely, in granulosa cells from the pre-antral follicle stage onward.

The protein localises to the nucleus. The protein resides in the chromosome. It localises to the nucleus speckle. May play a role in pre-mRNA splicing as component of the spliceosome. Acts as an important regulator of the cell cycle that participates in the maintenance of genome integrity. During cell cycle progression in embryonic fibroblast, prevents replication fork collapse, double-strand break formation and cell cycle checkpoint activation. Controls mitotic cell cycle progression and cell survival in rapidly proliferating intestinal epithelium and embryonic stem cells. During the embryo preimplantation, controls different aspects of M phase. During early oocyte growth, plays a role in oocyte survival by preventing chromosomal breaks formation, activation of TP63 and reduction of transcription. In Mus musculus (Mouse), this protein is Zinc finger protein 830.